A 532-amino-acid polypeptide reads, in one-letter code: 2,3-bisphosphoglycerate-independent phosphoglycerate mutase (532 aa).

Residues aspartate 15 and serine 65 each coordinate Mn(2+). The Phosphoserine intermediate role is filled by serine 65. Substrate contacts are provided by residues histidine 126, 156-157 (RD), arginine 188, arginine 194, 258-261 (RPDR), and lysine 331. Mn(2+)-binding residues include aspartate 398, histidine 402, aspartate 439, histidine 440, and histidine 457.

It belongs to the BPG-independent phosphoglycerate mutase family. In terms of assembly, monomer. Requires Mn(2+) as cofactor.

It catalyses the reaction (2R)-2-phosphoglycerate = (2R)-3-phosphoglycerate. It participates in carbohydrate degradation; glycolysis; pyruvate from D-glyceraldehyde 3-phosphate: step 3/5. In terms of biological role, catalyzes the interconversion of 2-phosphoglycerate and 3-phosphoglycerate. The sequence is that of 2,3-bisphosphoglycerate-independent phosphoglycerate mutase from Synechococcus elongatus (strain ATCC 33912 / PCC 7942 / FACHB-805) (Anacystis nidulans R2).